Here is a 120-residue protein sequence, read N- to C-terminus: Large ribosomal subunit protein eL34 (120 aa).

Belongs to the eukaryotic ribosomal protein eL34 family.

The chain is Large ribosomal subunit protein eL34 (RPL34) from Pisum sativum (Garden pea).